The primary structure comprises 146 residues: Aminoglycoside N(6')-acetyltransferase type 1 (146 aa).

An N-acetyltransferase domain is found at 1 to 146 (MIVICDHDNL…RVVFYRKTLG (146 aa)). Residues tryptophan 21, tyrosine 66, glutamate 79, and aspartate 115 each contribute to the substrate site. Asparagine 120 serves as a coordination point for acetyl-CoA. Glutamate 136 is a substrate binding site.

Homodimer.

The enzyme catalyses kanamycin B + acetyl-CoA = N(6')-acetylkanamycin B + CoA + H(+). Catalyzes the transfer of an acetyl group from acetyl-CoA to the 6'-amino group of aminoglycoside molecules conferring resistance to antibiotics containing the purpurosamine ring including amikacin, tobramycin, netilmicin, isepamicin and sisomicin. The sequence is that of Aminoglycoside N(6')-acetyltransferase type 1 from Serratia marcescens.